A 546-amino-acid chain; its full sequence is 2-isopropylmalate synthase (546 aa).

One can recognise a Pyruvate carboxyltransferase domain in the interval 8-271 (ILIFDTTLRD…NKFFNRNSDS (264 aa)). 4 residues coordinate Mn(2+): Asp17, His208, His210, and Asn244. The segment at 408–546 (QLSLVQVSCG…DKTLLSNPGK (139 aa)) is regulatory domain.

Belongs to the alpha-IPM synthase/homocitrate synthase family. LeuA type 1 subfamily. Homodimer. Mn(2+) is required as a cofactor.

The protein localises to the cytoplasm. The catalysed reaction is 3-methyl-2-oxobutanoate + acetyl-CoA + H2O = (2S)-2-isopropylmalate + CoA + H(+). It functions in the pathway amino-acid biosynthesis; L-leucine biosynthesis; L-leucine from 3-methyl-2-oxobutanoate: step 1/4. Catalyzes the condensation of the acetyl group of acetyl-CoA with 3-methyl-2-oxobutanoate (2-ketoisovalerate) to form 3-carboxy-3-hydroxy-4-methylpentanoate (2-isopropylmalate). This chain is 2-isopropylmalate synthase, found in Prochlorococcus marinus (strain MIT 9215).